A 160-amino-acid polypeptide reads, in one-letter code: Protein-export protein SecB (160 aa).

This sequence belongs to the SecB family. As to quaternary structure, homotetramer, a dimer of dimers. One homotetramer interacts with 1 SecA dimer.

The protein localises to the cytoplasm. Functionally, one of the proteins required for the normal export of preproteins out of the cell cytoplasm. It is a molecular chaperone that binds to a subset of precursor proteins, maintaining them in a translocation-competent state. It also specifically binds to its receptor SecA. In Burkholderia lata (strain ATCC 17760 / DSM 23089 / LMG 22485 / NCIMB 9086 / R18194 / 383), this protein is Protein-export protein SecB.